Consider the following 333-residue polypeptide: Homoserine O-succinyltransferase (333 aa).

Residue Cys-147 is the Acyl-thioester intermediate of the active site. Substrate contacts are provided by Lys-168 and Ser-196. His-239 acts as the Proton acceptor in catalysis. Glu-241 is a catalytic residue. Residue Arg-253 participates in substrate binding.

This sequence belongs to the MetA family.

It localises to the cytoplasm. The enzyme catalyses L-homoserine + succinyl-CoA = O-succinyl-L-homoserine + CoA. It participates in amino-acid biosynthesis; L-methionine biosynthesis via de novo pathway; O-succinyl-L-homoserine from L-homoserine: step 1/1. Its function is as follows. Transfers a succinyl group from succinyl-CoA to L-homoserine, forming succinyl-L-homoserine. The sequence is that of Homoserine O-succinyltransferase from Rhodopseudomonas palustris.